A 448-amino-acid polypeptide reads, in one-letter code: Methylenetetrahydrofolate--tRNA-(uracil-5-)-methyltransferase TrmFO (448 aa).

13 to 18 lines the FAD pocket; it reads GAGLAG.

This sequence belongs to the MnmG family. TrmFO subfamily. The cofactor is FAD.

Its subcellular location is the cytoplasm. It carries out the reaction uridine(54) in tRNA + (6R)-5,10-methylene-5,6,7,8-tetrahydrofolate + NADH + H(+) = 5-methyluridine(54) in tRNA + (6S)-5,6,7,8-tetrahydrofolate + NAD(+). The enzyme catalyses uridine(54) in tRNA + (6R)-5,10-methylene-5,6,7,8-tetrahydrofolate + NADPH + H(+) = 5-methyluridine(54) in tRNA + (6S)-5,6,7,8-tetrahydrofolate + NADP(+). In terms of biological role, catalyzes the folate-dependent formation of 5-methyl-uridine at position 54 (M-5-U54) in all tRNAs. The polypeptide is Methylenetetrahydrofolate--tRNA-(uracil-5-)-methyltransferase TrmFO (Streptococcus pyogenes serotype M4 (strain MGAS10750)).